The primary structure comprises 173 residues: Large ribosomal subunit protein uL10 (173 aa).

Belongs to the universal ribosomal protein uL10 family. In terms of assembly, part of the ribosomal stalk of the 50S ribosomal subunit. The N-terminus interacts with L11 and the large rRNA to form the base of the stalk. The C-terminus forms an elongated spine to which L12 dimers bind in a sequential fashion forming a multimeric L10(L12)X complex.

Functionally, forms part of the ribosomal stalk, playing a central role in the interaction of the ribosome with GTP-bound translation factors. In Chlorobaculum tepidum (strain ATCC 49652 / DSM 12025 / NBRC 103806 / TLS) (Chlorobium tepidum), this protein is Large ribosomal subunit protein uL10.